Consider the following 92-residue polypeptide: Beta-2-microglobulin (92 aa).

One can recognise an Ig-like C1-type domain in the interval Pro-2–Ile-91. A disulfide bond links Cys-22 and Cys-77.

The protein belongs to the beta-2-microglobulin family. In terms of assembly, heterodimer of an alpha chain and a beta chain. Beta-2-microglobulin is the beta-chain of major histocompatibility complex class I molecules.

The protein localises to the secreted. In terms of biological role, component of the class I major histocompatibility complex (MHC). Involved in the presentation of peptide antigens to the immune system. The polypeptide is Beta-2-microglobulin (B2m) (Mus cervicolor (Fawn-colored mouse)).